The chain runs to 184 residues: NADH-quinone oxidoreductase subunit B (184 aa).

Residues C37, C38, C103, and C132 each contribute to the [4Fe-4S] cluster site.

The protein belongs to the complex I 20 kDa subunit family. In terms of assembly, NDH-1 is composed of 14 different subunits. Subunits NuoB, C, D, E, F, and G constitute the peripheral sector of the complex. [4Fe-4S] cluster serves as cofactor.

The protein localises to the cell membrane. It catalyses the reaction a quinone + NADH + 5 H(+)(in) = a quinol + NAD(+) + 4 H(+)(out). In terms of biological role, NDH-1 shuttles electrons from NADH, via FMN and iron-sulfur (Fe-S) centers, to quinones in the respiratory chain. The immediate electron acceptor for the enzyme in this species is believed to be a menaquinone. Couples the redox reaction to proton translocation (for every two electrons transferred, four hydrogen ions are translocated across the cytoplasmic membrane), and thus conserves the redox energy in a proton gradient. This is NADH-quinone oxidoreductase subunit B from Mycobacterium sp. (strain JLS).